The sequence spans 427 residues: Glycophorin-binding protein-related antigen (427 aa).

GBP repeat units follow at residues 109–149 (LTSA…DELE), 150–189 (TSADPEGQIMKAYAADPEYRKHLNVLYQILNNTDPNDEVE), 190–229 (SSADPEGQIMKAYAADPEYRKHVNVLYQILNNTDPNDELE), 230–269 (TSADPEGQIMKAYAADPEYRKHVNVLYQILNHTDSSEVET), 270–307 (SADPEGQIMKAYAADPEYRKHVNVLYQILNHTDSSEVE), 308–347 (TSADPEGQIMKAYAADPEYRKHVNVLYQILNNTDPNDELE), 348–387 (TSADPEGQIMKAYAADPEYRKHVNVLYQILNNTDPNDELE), and 388–427 (TSADPEGQIMKAYAADPEYRKHVNVLYQILNNTDPNDESS).

The sequence is that of Glycophorin-binding protein-related antigen (GBPH) from Plasmodium falciparum (isolate FCBR / Columbia).